The chain runs to 197 residues: Lymphotoxin-alpha (197 aa).

Positions 1 to 26 (MTPPGRLYLPLLLGLLLAPPPPGAQG) are cleaved as a signal peptide. Residues 55 to 197 (PAAHLVGDPS…SSVFFGAFAL (143 aa)) enclose the THD domain. A glycan (N-linked (GlcNAc...) asparagine) is linked at asparagine 88. An intrachain disulfide couples cysteine 112 to cysteine 148.

This sequence belongs to the tumor necrosis factor family. As to quaternary structure, homotrimer, and heterotrimer of either two LTB and one LTA subunits or (less prevalent) two LTA and one LTB subunits. Interacts with TNFRSF14.

The protein localises to the secreted. The protein resides in the membrane. Functionally, cytokine that in its homotrimeric form binds to TNFRSF1A/TNFR1, TNFRSF1B/TNFBR and TNFRSF14/HVEM. In its heterotrimeric form with LTB binds to TNFRSF3/LTBR. Lymphotoxin is produced by lymphocytes and is cytotoxic for a wide range of tumor cells in vitro and in vivo. The sequence is that of Lymphotoxin-alpha (LTA) from Oryctolagus cuniculus (Rabbit).